The primary structure comprises 285 residues: Eukaryotic translation initiation factor 3 subunit F-2 (285 aa).

Residues 11–145 form the MPN domain; sequence VLIKPLVLFQ…TRLYCAVEIG (135 aa).

This sequence belongs to the eIF-3 subunit F family. As to quaternary structure, component of the eukaryotic translation initiation factor 3 (eIF-3) complex. The eIF-3 complex interacts with pix.

It localises to the cytoplasm. In terms of biological role, component of the eukaryotic translation initiation factor 3 (eIF-3) complex, which is involved in protein synthesis of a specialized repertoire of mRNAs and, together with other initiation factors, stimulates binding of mRNA and methionyl-tRNAi to the 40S ribosome. The eIF-3 complex specifically targets and initiates translation of a subset of mRNAs involved in cell proliferation. The sequence is that of Eukaryotic translation initiation factor 3 subunit F-2 from Drosophila erecta (Fruit fly).